Consider the following 481-residue polypeptide: Ribulose bisphosphate carboxylase large chain (481 aa).

Residues 1–2 (MS) constitute a propeptide that is removed on maturation. An N-acetylproline modification is found at P3. N6,N6,N6-trimethyllysine is present on K14. Substrate is bound by residues N123 and T173. K175 acts as the Proton acceptor in catalysis. K177 provides a ligand contact to substrate. The Mg(2+) site is built by K201, D203, and E204. K201 is modified (N6-carboxylysine). Residue H294 is the Proton acceptor of the active site. R295, H327, and S379 together coordinate substrate.

The protein belongs to the RuBisCO large chain family. Type I subfamily. Heterohexadecamer of 8 large chains and 8 small chains; disulfide-linked. The disulfide link is formed within the large subunit homodimers. It depends on Mg(2+) as a cofactor. The disulfide bond which can form in the large chain dimeric partners within the hexadecamer appears to be associated with oxidative stress and protein turnover.

It is found in the plastid. It carries out the reaction 2 (2R)-3-phosphoglycerate + 2 H(+) = D-ribulose 1,5-bisphosphate + CO2 + H2O. The enzyme catalyses D-ribulose 1,5-bisphosphate + O2 = 2-phosphoglycolate + (2R)-3-phosphoglycerate + 2 H(+). RuBisCO catalyzes two reactions: the carboxylation of D-ribulose 1,5-bisphosphate, the primary event in carbon dioxide fixation, as well as the oxidative fragmentation of the pentose substrate in the photorespiration process. Both reactions occur simultaneously and in competition at the same active site. This is Ribulose bisphosphate carboxylase large chain from Cuscuta gronovii (Common dodder).